An 826-amino-acid polypeptide reads, in one-letter code: MWALCSLLRSAAGRTMSQGRTISQAPARRERPRKDPLRHLRTREKRGPSGCSGGPNTVYLQVVAAGSRDSGAALYVFSEFNRYLFNCGEGVQRLMQEHKLKVVRLDNIFLTRMHWSNVGGLSGMILTLKETGLPKCVLSGPPQLEKYLEAIKIFSGPLKGIELAVRPHSAPEYEDETMTVYQIPIHSEQRRGRHQPWQSPERPLSRLSPERSSDSESNENEPHLPHGVSQRRGVRDSSLVVAFICKLHLKRGNFLVLKAKEMGLPVGTAAIAPIIAAVKDGKSITHEGREILAEELCTPPDPGAAFVVVECPDESFIQPICENATFQRYQGKADAPVALVVHMAPESVLVDSRYQQWMERFGPDTQHLVLNENCASVHNLRSHKIQTQLNLIHPDIFPLLTSFPCKKEGPTLSVPMVQGECLLKYQLRPRREWQRDAIITCNPEEFIVEALQLPNFQQSVQEYRRSVQDVPAPAEKRSQYPEIIFLGTGSAIPMKIRNVSATLVNISPDTSLLLDCGEGTFGQLCRHYGDQVDRVLGTLAAVFVSHLHADHHTGLLNILLQREQALASLGKPLHPLLVVAPSQLKAWLQQYHNQCQEVLHHISMIPAKCLQEGAEISSPAVERLISSLLRTCDLEEFQTCLVRHCKHAFGCALVHTSGWKVVYSGDTMPCEALVRMGKDATLLIHEATLEDGLEEEAVEKTHSTTSQAISVGMRMNAEFIMLNHFSQRYAKVPLFSPNFNEKVGVAFDHMKVCFGDFPTMPKLIPPLKALFAGDIEEMEERREKRELRQVRAALLSGELAGGLEDGEPQQKRAHTEEPQAKKVRAQ.

A mitochondrion-targeting transit peptide spans 1–16; the sequence is MWALCSLLRSAAGRTM. A compositionally biased stretch (polar residues) spans 15 to 24; it reads TMSQGRTISQ. Disordered regions lie at residues 15 to 51 and 189 to 231; these read TMSQGRTISQAPARRERPRKDPLRHLRTREKRGPSGC and QRRG…VSQR. The span at 27 to 38 shows a compositional bias: basic and acidic residues; sequence ARRERPRKDPLR. Phosphoserine is present on residues serine 199, serine 208, serine 212, serine 229, serine 618, and serine 736. The segment covering 208-224 has biased composition (basic and acidic residues); it reads SPERSSDSESNENEPHL. Residues 798–826 form a disordered region; it reads ELAGGLEDGEPQQKRAHTEEPQAKKVRAQ. Basic and acidic residues predominate over residues 808 to 820; sequence PQQKRAHTEEPQA.

The protein belongs to the RNase Z family. As to quaternary structure, homodimer. Interacts with PTCD1. Requires Zn(2+) as cofactor.

It localises to the mitochondrion. The protein resides in the mitochondrion matrix. The protein localises to the mitochondrion nucleoid. Its subcellular location is the nucleus. The catalysed reaction is Endonucleolytic cleavage of RNA, removing extra 3' nucleotides from tRNA precursor, generating 3' termini of tRNAs. A 3'-hydroxy group is left at the tRNA terminus and a 5'-phosphoryl group is left at the trailer molecule.. In terms of biological role, zinc phosphodiesterase, which displays mitochondrial tRNA 3'-processing endonuclease activity. Involved in tRNA maturation, by removing a 3'-trailer from precursor tRNA. Associates with mitochondrial DNA complexes at the nucleoids to initiate RNA processing and ribosome assembly. The sequence is that of Zinc phosphodiesterase ELAC protein 2 (ELAC2) from Gorilla gorilla gorilla (Western lowland gorilla).